The sequence spans 81 residues: NADH-ubiquinone oxidoreductase chain 6 (81 aa).

Transmembrane regions (helical) follow at residues M1–S21, Y27–G47, and V48–V68.

The protein belongs to the complex I subunit 6 family.

It localises to the mitochondrion membrane. The catalysed reaction is a ubiquinone + NADH + 5 H(+)(in) = a ubiquinol + NAD(+) + 4 H(+)(out). Functionally, core subunit of the mitochondrial membrane respiratory chain NADH dehydrogenase (Complex I) that is believed to belong to the minimal assembly required for catalysis. Complex I functions in the transfer of electrons from NADH to the respiratory chain. The immediate electron acceptor for the enzyme is believed to be ubiquinone. This is NADH-ubiquinone oxidoreductase chain 6 (MT-ND6) from Anas platyrhynchos (Mallard).